The sequence spans 369 residues: Secondary metabolism regulator laeA (369 aa).

A disordered region spans residues methionine 1–aspartate 37. Over residues aspartate 20–aspartate 37 the composition is skewed to low complexity.

Belongs to the methyltransferase superfamily. LaeA methyltransferase family. As to quaternary structure, component of the heterotrimeric velvet complex composed of laeA, veA and velB; VeA acting as a bridging protein between laeA and velB. Interacts directly with veA.

The protein localises to the nucleus. The enzyme catalyses L-methionyl-[protein] + S-adenosyl-L-methionine = S-methyl-L-methionyl-[protein] + S-adenosyl-L-homocysteine. Its function is as follows. Methyltransferase that performs automethylation. No other methyl-accepting substrate has been identified yet. Component of the velvet transcription factor complex that acts as a global regulator for secondary metabolite gene expression. Required for aflR expression and subsequent aflatoxin production. Negatively regulates veA expression. Controls conidiophore and conidial development. Required for hydrophobin production which plays a role in cell surface hydrophobicity and host defense escape. The polypeptide is Secondary metabolism regulator laeA (Aspergillus flavus (strain ATCC 200026 / FGSC A1120 / IAM 13836 / NRRL 3357 / JCM 12722 / SRRC 167)).